Consider the following 540-residue polypeptide: Chaperonin GroEL (540 aa).

Residues 30–33 (TLGP), 87–91 (DGTTT), G414, 479–481 (NAL), and D495 each bind ATP.

This sequence belongs to the chaperonin (HSP60) family. As to quaternary structure, forms a cylinder of 14 subunits composed of two heptameric rings stacked back-to-back. Interacts with the co-chaperonin GroES.

The protein localises to the cytoplasm. The enzyme catalyses ATP + H2O + a folded polypeptide = ADP + phosphate + an unfolded polypeptide.. In terms of biological role, together with its co-chaperonin GroES, plays an essential role in assisting protein folding. The GroEL-GroES system forms a nano-cage that allows encapsulation of the non-native substrate proteins and provides a physical environment optimized to promote and accelerate protein folding. The sequence is that of Chaperonin GroEL from Carboxydothermus hydrogenoformans (strain ATCC BAA-161 / DSM 6008 / Z-2901).